The sequence spans 465 residues: Cyclin-A1 (465 aa).

It belongs to the cyclin family. Cyclin AB subfamily. Interacts with the CDK2 and the CDC2 protein kinases to form a serine/threonine kinase holoenzyme complex. The cyclin subunit imparts substrate specificity to the complex. Does not bind CDK4 and CDK5 (in vitro). The cyclin A1-CDK2 complex interacts with transcription factor E2F-1 and RB proteins. Found in a complex with CDK2, CABLES1 and CCNE1. Interacts with INCA1. Interacts with KLHDC9. In terms of processing, polyubiquitinated via 'Lys-11'-linked ubiquitin by the anaphase-promoting complex (APC/C), leading to its degradation by the proteasome. Deubiquitinated and stabilized by USP37 enables entry into S phase. Ubiquitinated during the G1 phase by the SCF(FBXO31) complex, leading to its proteasomal degradation. As to expression, very high levels in testis and very low levels in brain. Also found in myeloid leukemia cell lines.

Its subcellular location is the nucleus. May be involved in the control of the cell cycle at the G1/S (start) and G2/M (mitosis) transitions. May primarily function in the control of the germline meiotic cell cycle and additionally in the control of mitotic cell cycle in some somatic cells. This Homo sapiens (Human) protein is Cyclin-A1 (CCNA1).